A 329-amino-acid chain; its full sequence is 2-oxoglutarate-dependent dioxygenase htyE (329 aa).

The region spanning 175–289 (NTSELRLLHY…RYSVAYFGKP (115 aa)) is the Fe2OG dioxygenase domain. The Fe cation site is built by His-201, Asp-203, and His-261. Arg-280 lines the 2-oxoglutarate pocket.

The protein belongs to the iron/ascorbate-dependent oxidoreductase family. The cofactor is Fe(2+).

It functions in the pathway antifungal biosynthesis. In terms of biological role, 2-oxoglutarate-dependent dioxygenase; part of the gene cluster that mediates the de novo generation of L-homotyrosine from acetyl-CoA and 4-hydroxyphenyl-pyruvate. L-homotyrosine is a building block of echinocandin B, a fungal lipidated cyclic hexapeptide that acts as an antifungal agent. L-homotyrosine 4-hydroxyphenyl-pyruvate first undergoes an aldol-type condensation by htyA with the C-2 of acetyl-CoA followed by the release of CoA to form 2-(4-hydroxybenzyl)-malate. This is followed by isomerization of 2-(4-hydroxy-benzyl)-malate to 3-(4-hydroxybenzyl)-malate by htyD. Thereafter, 3-(4-hydroxybenzyl)-malate undergoes decarboxylation and oxidation to form 2-oxo-4-(4-hydroxybenzyl)butanoic acid, coupled to reduction of NAD(+) to NADH by htyC. The product then undergoes transamination catalyzed by htyB to form L-homotyrosine. In Aspergillus rugulosus (Emericella rugulosa), this protein is 2-oxoglutarate-dependent dioxygenase htyE.